A 271-amino-acid chain; its full sequence is Tryptophan synthase alpha chain (271 aa).

Active-site proton acceptor residues include Glu-49 and Asp-60.

It belongs to the TrpA family. In terms of assembly, tetramer of two alpha and two beta chains.

The catalysed reaction is (1S,2R)-1-C-(indol-3-yl)glycerol 3-phosphate + L-serine = D-glyceraldehyde 3-phosphate + L-tryptophan + H2O. It functions in the pathway amino-acid biosynthesis; L-tryptophan biosynthesis; L-tryptophan from chorismate: step 5/5. The alpha subunit is responsible for the aldol cleavage of indoleglycerol phosphate to indole and glyceraldehyde 3-phosphate. This is Tryptophan synthase alpha chain from Burkholderia pseudomallei (strain K96243).